Here is a 417-residue protein sequence, read N- to C-terminus: Spermidine/putrescine import ATP-binding protein PotA (417 aa).

Positions 5–308 (IILKDLTKVF…PANRFVAQFV (304 aa)) constitute an ABC transporter domain. ATP is bound at residue 37–44 (GPSGCGKT). The insert stretch occupies residues 105–177 (DFNSKIKDNL…TALKCKKINK (73 aa)).

It belongs to the ABC transporter superfamily. Spermidine/putrescine importer (TC 3.A.1.11.1) family. The complex is composed of two ATP-binding proteins (PotA), two transmembrane proteins (PotB and PotC) and a solute-binding protein (PotD).

The protein localises to the cell membrane. The catalysed reaction is ATP + H2O + polyamine-[polyamine-binding protein]Side 1 = ADP + phosphate + polyamineSide 2 + [polyamine-binding protein]Side 1.. Functionally, part of the ABC transporter complex PotABCD involved in spermidine/putrescine import. Responsible for energy coupling to the transport system. In Aster yellows witches'-broom phytoplasma (strain AYWB), this protein is Spermidine/putrescine import ATP-binding protein PotA.